Consider the following 147-residue polypeptide: Cytochrome c-type biogenesis protein CcmE (147 aa).

Residues 1–9 (MKSLKKKRR) are Cytoplasmic-facing. Residues 10 to 30 (IQILVAAAVALVLAVGLIGYG) traverse the membrane as a helical; Signal-anchor for type II membrane protein segment. At 31–147 (FRDGINLYRS…EQGVYQEPNS (117 aa)) the chain is on the periplasmic side. Positions 123 and 127 each coordinate heme.

It belongs to the CcmE/CycJ family.

The protein resides in the cell inner membrane. Functionally, heme chaperone required for the biogenesis of c-type cytochromes. Transiently binds heme delivered by CcmC and transfers the heme to apo-cytochromes in a process facilitated by CcmF and CcmH. The sequence is that of Cytochrome c-type biogenesis protein CcmE from Paracoccus denitrificans (strain Pd 1222).